Here is a 240-residue protein sequence, read N- to C-terminus: Endonuclease V (240 aa).

Residues Asp46 and Asp116 each contribute to the Mg(2+) site.

The protein belongs to the endonuclease V family. Requires Mg(2+) as cofactor.

Its subcellular location is the cytoplasm. It carries out the reaction Endonucleolytic cleavage at apurinic or apyrimidinic sites to products with a 5'-phosphate.. In terms of biological role, DNA repair enzyme involved in the repair of deaminated bases. Selectively cleaves double-stranded DNA at the second phosphodiester bond 3' to a deoxyinosine leaving behind the intact lesion on the nicked DNA. This Rhodospirillum centenum (strain ATCC 51521 / SW) protein is Endonuclease V.